We begin with the raw amino-acid sequence, 96 residues long: UPF0235 protein YggU (96 aa).

Belongs to the UPF0235 family.

In Escherichia coli O157:H7, this protein is UPF0235 protein YggU.